We begin with the raw amino-acid sequence, 332 residues long: Formamidase (332 aa).

The region spanning 14–259 (FLTALIQYPV…WEIVTAEVYP (246 aa)) is the CN hydrolase domain. E60 (proton acceptor) is an active-site residue. The Proton donor role is filled by K132. Catalysis depends on C165, which acts as the Nucleophile.

The protein belongs to the carbon-nitrogen hydrolase superfamily. Aliphatic amidase family.

It carries out the reaction formamide + H2O = formate + NH4(+). Its function is as follows. Is an aliphatic amidase with a restricted substrate specificity, as it only hydrolyzes formamide. The chain is Formamidase from Bacillus cereus (strain G9842).